A 62-amino-acid chain; its full sequence is Protein DsrB (62 aa).

The protein belongs to the DsrB family.

This chain is Protein DsrB, found in Shigella flexneri serotype 5b (strain 8401).